Consider the following 293-residue polypeptide: MKLSNQFLITITLLITSITFAQEAPHFKPGEDPRQPHQEWKLIENMSDEFEGKKIDEKKWQISGQGWIGRAPGLFLAENISLNNGSLQITTTMLPEPIVKNNKTYTHGGGYVGSRNGMTYGYYECEMKANKTFMSSTFWLINEGKDRLGCDKRTTELDIQESVGQITNDADWMKYFDQTMNSNTHSRNIPEGCEYEKGSSKGKAELGGKAYEDFHVYGVWWKSKDEIIFFLDGKMQSKVTPPADFDIEMYLRMVVETYDWNPVPKDGGMTGSKEDRTTTYNWVRSWQLVDSKN.

Residues 1–21 form the signal peptide; sequence MKLSNQFLITITLLITSITFA. The GH16 domain maps to 38–291; that stretch reads QEWKLIENMS…WVRSWQLVDS (254 aa). Positions 67, 70, 156, 161, and 256 each coordinate substrate. Glu-156 (nucleophile) is an active-site residue. The active-site Proton donor is Glu-161.

This sequence belongs to the glycosyl hydrolase 16 family.

The protein resides in the periplasm. It carries out the reaction Hydrolysis of beta-D-galactopyranose-(1-&gt;4)-alpha-L-galactopyranose-6-sulfate linkages in porphyran.. Its function is as follows. Cleaves the sulfated polysaccharide porphyran at the (1-&gt;4) linkages between beta-D-galactopyranose and alpha-L-galactopyranose-6-sulfate, forming mostly the disaccharide alpha-L-galactopyranose-6-sulfate-(1-&gt;3)-beta-D-galactose. Some longer oligosaccharides of even number of residues are also observed. Inactive on the non-sulfated agarose portion of the porphyran backbone. In contrast to PorA, tolerates the presence of 3-6-anhydro-L-galactose in subsite -2. The sequence is that of Beta-porphyranase B (porB) from Zobellia galactanivorans (strain DSM 12802 / CCUG 47099 / CIP 106680 / NCIMB 13871 / Dsij).